Here is a 560-residue protein sequence, read N- to C-terminus: NADH-quinone oxidoreductase subunit C/D (560 aa).

The segment at 2–157 (NKLENLKQLL…NNQQACTNSL (156 aa)) is NADH dehydrogenase I subunit C. Residues 175 to 560 (KYLPLNIGPS…MNLIAGELDR (386 aa)) are NADH dehydrogenase I subunit D.

This sequence in the N-terminal section; belongs to the complex I 30 kDa subunit family. In the C-terminal section; belongs to the complex I 49 kDa subunit family. In terms of assembly, NDH-1 is composed of 13 different subunits. Subunits NuoB, CD, E, F, and G constitute the peripheral sector of the complex.

It is found in the cytoplasm. The protein localises to the cell inner membrane. It carries out the reaction a quinone + NADH + 5 H(+)(in) = a quinol + NAD(+) + 4 H(+)(out). Functionally, NDH-1 shuttles electrons from NADH, via FMN and iron-sulfur (Fe-S) centers, to quinones in the respiratory chain. The immediate electron acceptor for the enzyme in this species is believed to be ubiquinone. Couples the redox reaction to proton translocation (for every two electrons transferred, four hydrogen ions are translocated across the cytoplasmic membrane), and thus conserves the redox energy in a proton gradient. In Bdellovibrio bacteriovorus (strain ATCC 15356 / DSM 50701 / NCIMB 9529 / HD100), this protein is NADH-quinone oxidoreductase subunit C/D.